The following is a 377-amino-acid chain: Succinyl-diaminopimelate desuccinylase (377 aa).

His67 provides a ligand contact to Zn(2+). Residue Asp69 is part of the active site. Residue Asp100 participates in Zn(2+) binding. Glu134 serves as the catalytic Proton acceptor. Residues Glu135, Glu163, and His349 each coordinate Zn(2+).

It belongs to the peptidase M20A family. DapE subfamily. Homodimer. Requires Zn(2+) as cofactor. The cofactor is Co(2+).

It carries out the reaction N-succinyl-(2S,6S)-2,6-diaminopimelate + H2O = (2S,6S)-2,6-diaminopimelate + succinate. The protein operates within amino-acid biosynthesis; L-lysine biosynthesis via DAP pathway; LL-2,6-diaminopimelate from (S)-tetrahydrodipicolinate (succinylase route): step 3/3. Its function is as follows. Catalyzes the hydrolysis of N-succinyl-L,L-diaminopimelic acid (SDAP), forming succinate and LL-2,6-diaminopimelate (DAP), an intermediate involved in the bacterial biosynthesis of lysine and meso-diaminopimelic acid, an essential component of bacterial cell walls. This chain is Succinyl-diaminopimelate desuccinylase, found in Haemophilus influenzae (strain PittEE).